A 301-amino-acid chain; its full sequence is Cell division control protein 2 homolog 1 (301 aa).

Residues 5 to 297 (YERLQKIGEG…AAQALEHPYF (293 aa)) form the Protein kinase domain. ATP is bound by residues 11–19 (IGEGSYGVV) and K34. Residue S15 is modified to Phosphoserine. Y16 carries the post-translational modification Phosphotyrosine. D127 functions as the Proton acceptor in the catalytic mechanism. The residue at position 160 (T160) is a Phosphothreonine; by CAK.

Belongs to the protein kinase superfamily. CMGC Ser/Thr protein kinase family. CDC2/CDKX subfamily. In terms of assembly, forms a stable but non-covalent complex with a regulatory subunit and with a cyclin.

The catalysed reaction is L-seryl-[protein] + ATP = O-phospho-L-seryl-[protein] + ADP + H(+). It catalyses the reaction L-threonyl-[protein] + ATP = O-phospho-L-threonyl-[protein] + ADP + H(+). Its activity is regulated as follows. Phosphorylation at Ser-15 or Tyr-16 inactivates the enzyme, while phosphorylation at Thr-160 activates it. Probably involved in the control of the cell cycle. In Trypanosoma brucei brucei, this protein is Cell division control protein 2 homolog 1 (CRK1).